The chain runs to 571 residues: Proline--tRNA ligase (571 aa).

This sequence belongs to the class-II aminoacyl-tRNA synthetase family. ProS type 1 subfamily. Homodimer.

The protein resides in the cytoplasm. The enzyme catalyses tRNA(Pro) + L-proline + ATP = L-prolyl-tRNA(Pro) + AMP + diphosphate. Catalyzes the attachment of proline to tRNA(Pro) in a two-step reaction: proline is first activated by ATP to form Pro-AMP and then transferred to the acceptor end of tRNA(Pro). As ProRS can inadvertently accommodate and process non-cognate amino acids such as alanine and cysteine, to avoid such errors it has two additional distinct editing activities against alanine. One activity is designated as 'pretransfer' editing and involves the tRNA(Pro)-independent hydrolysis of activated Ala-AMP. The other activity is designated 'posttransfer' editing and involves deacylation of mischarged Ala-tRNA(Pro). The misacylated Cys-tRNA(Pro) is not edited by ProRS. The polypeptide is Proline--tRNA ligase (Histophilus somni (strain 2336) (Haemophilus somnus)).